The sequence spans 115 residues: Large ribosomal subunit protein bL19 (115 aa).

It belongs to the bacterial ribosomal protein bL19 family.

Its function is as follows. This protein is located at the 30S-50S ribosomal subunit interface and may play a role in the structure and function of the aminoacyl-tRNA binding site. This Francisella tularensis subsp. holarctica (strain FTNF002-00 / FTA) protein is Large ribosomal subunit protein bL19.